Consider the following 990-residue polypeptide: Transposase for transposon Tn3926 (990 aa).

Residues 673–698 (GDGTTSSSDGQNFRTGSKAESTGHIN) form a disordered region. Residues 674-696 (DGTTSSSDGQNFRTGSKAESTGH) show a composition bias toward polar residues.

Belongs to the transposase 7 family.

Its function is as follows. Required for transposition of transposon Tn3926. This chain is Transposase for transposon Tn3926 (tnpA), found in Escherichia coli.